Reading from the N-terminus, the 192-residue chain is UPF0149 protein YgfB (192 aa).

It belongs to the UPF0149 family.

In Escherichia coli O127:H6 (strain E2348/69 / EPEC), this protein is UPF0149 protein YgfB.